The chain runs to 407 residues: Pyridinium-3,5-bisthiocarboxylic acid mononucleotide nickel insertion protein (407 aa).

This sequence belongs to the LarC family.

The enzyme catalyses Ni(II)-pyridinium-3,5-bisthiocarboxylate mononucleotide = pyridinium-3,5-bisthiocarboxylate mononucleotide + Ni(2+). Functionally, involved in the biosynthesis of a nickel-pincer cofactor ((SCS)Ni(II) pincer complex). Binds Ni(2+), and functions in nickel delivery to pyridinium-3,5-bisthiocarboxylic acid mononucleotide (P2TMN), to form the mature cofactor. Is thus probably required for the activation of nickel-pincer cofactor-dependent enzymes. This chain is Pyridinium-3,5-bisthiocarboxylic acid mononucleotide nickel insertion protein, found in Acetivibrio thermocellus (strain ATCC 27405 / DSM 1237 / JCM 9322 / NBRC 103400 / NCIMB 10682 / NRRL B-4536 / VPI 7372) (Clostridium thermocellum).